Consider the following 283-residue polypeptide: Urease accessory protein UreD 1 (283 aa).

Belongs to the UreD family. In terms of assembly, ureD, UreF and UreG form a complex that acts as a GTP-hydrolysis-dependent molecular chaperone, activating the urease apoprotein by helping to assemble the nickel containing metallocenter of UreC. The UreE protein probably delivers the nickel.

The protein localises to the cytoplasm. In terms of biological role, required for maturation of urease via the functional incorporation of the urease nickel metallocenter. The chain is Urease accessory protein UreD 1 from Brucella anthropi (strain ATCC 49188 / DSM 6882 / CCUG 24695 / JCM 21032 / LMG 3331 / NBRC 15819 / NCTC 12168 / Alc 37) (Ochrobactrum anthropi).